Here is a 350-residue protein sequence, read N- to C-terminus: uncharacterized protein (350 aa).

Positions 330-350 (RHPGDLRSEPHYRPSAKLAEF) are disordered. The span at 331–341 (HPGDLRSEPHY) shows a compositional bias: basic and acidic residues.

This is an uncharacterized protein from Mycobacterium tuberculosis.